The following is a 249-amino-acid chain: NADH-quinone oxidoreductase subunit C (249 aa).

It belongs to the complex I 30 kDa subunit family. NDH-1 is composed of 14 different subunits. Subunits NuoB, C, D, E, F, and G constitute the peripheral sector of the complex.

It is found in the cell inner membrane. The catalysed reaction is a quinone + NADH + 5 H(+)(in) = a quinol + NAD(+) + 4 H(+)(out). Functionally, NDH-1 shuttles electrons from NADH, via FMN and iron-sulfur (Fe-S) centers, to quinones in the respiratory chain. The immediate electron acceptor for the enzyme in this species is believed to be ubiquinone. Couples the redox reaction to proton translocation (for every two electrons transferred, four hydrogen ions are translocated across the cytoplasmic membrane), and thus conserves the redox energy in a proton gradient. The chain is NADH-quinone oxidoreductase subunit C from Stenotrophomonas maltophilia (strain R551-3).